A 76-amino-acid polypeptide reads, in one-letter code: Paralithocin 3 (76 aa).

The first 23 residues, 1-23, serve as a signal peptide directing secretion; it reads MGPMKVLLVMLVVMVAAPHIADA. Cystine bridges form between cysteine 31–cysteine 62, cysteine 40–cysteine 58, cysteine 44–cysteine 56, and cysteine 49–cysteine 59. Proline 74 is subject to Proline amide; partial.

It belongs to the paralithocin family. In terms of processing, the amidated form is probably the active form.

Has antibacterial activity, mainly against marine Gram-positive bacteria like C.maltaromaticum (MIC=25 uM), C.mobile (MIC=12.5 uM), C.divergens (MIC=25 uM) and C.funditum (MIC=12.5 uM) but also against C.glutamicum (MIC=12.5 uM). Has very little or no activity against Gram-negative bacteria. In Paralithodes camtschaticus (Red king crab), this protein is Paralithocin 3.